Here is a 458-residue protein sequence, read N- to C-terminus: RuvB-like helicase 1 (458 aa).

71-78 (GGPGTGKT) provides a ligand contact to ATP.

The protein belongs to the RuvB family. In terms of assembly, may form heterododecamers with hel-2/rvb2. Component of the SWR1 chromatin remodeling complex, the INO80 chromatin remodeling complex, and of the R2TP complex.

The protein resides in the nucleus. The catalysed reaction is ATP + H2O = ADP + phosphate + H(+). In terms of biological role, DNA helicase which participates in several chromatin remodeling complexes, including the SWR1 and the INO80 complexes. The SWR1 complex mediates the ATP-dependent exchange of histone H2A for the H2A variant H2A.Z leading to transcriptional regulation of selected genes by chromatin remodeling. The INO80 complex remodels chromatin by shifting nucleosomes and is involved in DNA repair. Also involved in pre-rRNA processing. This is RuvB-like helicase 1 (hel-1) from Neurospora crassa (strain ATCC 24698 / 74-OR23-1A / CBS 708.71 / DSM 1257 / FGSC 987).